A 360-amino-acid chain; its full sequence is Phospho-N-acetylmuramoyl-pentapeptide-transferase (360 aa).

A run of 10 helical transmembrane segments spans residues Gly-27–Leu-47, Gly-70–Trp-90, Val-98–Leu-118, Leu-134–Ala-154, Ala-168–Gly-188, Gly-199–Val-219, Leu-239–Pro-259, Ile-263–Ala-283, Ile-288–Val-308, and Gln-337–Leu-357.

This sequence belongs to the glycosyltransferase 4 family. MraY subfamily. It depends on Mg(2+) as a cofactor.

The protein resides in the cell inner membrane. It catalyses the reaction UDP-N-acetyl-alpha-D-muramoyl-L-alanyl-gamma-D-glutamyl-meso-2,6-diaminopimeloyl-D-alanyl-D-alanine + di-trans,octa-cis-undecaprenyl phosphate = di-trans,octa-cis-undecaprenyl diphospho-N-acetyl-alpha-D-muramoyl-L-alanyl-D-glutamyl-meso-2,6-diaminopimeloyl-D-alanyl-D-alanine + UMP. The protein operates within cell wall biogenesis; peptidoglycan biosynthesis. Its function is as follows. Catalyzes the initial step of the lipid cycle reactions in the biosynthesis of the cell wall peptidoglycan: transfers peptidoglycan precursor phospho-MurNAc-pentapeptide from UDP-MurNAc-pentapeptide onto the lipid carrier undecaprenyl phosphate, yielding undecaprenyl-pyrophosphoryl-MurNAc-pentapeptide, known as lipid I. The sequence is that of Phospho-N-acetylmuramoyl-pentapeptide-transferase from Methylorubrum populi (strain ATCC BAA-705 / NCIMB 13946 / BJ001) (Methylobacterium populi).